A 432-amino-acid chain; its full sequence is DNA damage-binding protein 2 (432 aa).

Residues 1–31 form a disordered region; the sequence is MAPKKCPETQKSPDVAVLLRSKSRRGPQELE. An N6-acetyllysine mark is found at K35 and K77. Required for interaction with DDB1 regions lie at residues 68–79 and 87–98; these read SIVRDLYQHKLG and QQGLQKSFLHSL. WD repeat units lie at residues 116–151, 159–194, 203–238, 244–287, and 290–329; these read SLAW…IFLK, ITGL…LRVY, WFCS…LWNL, KVAH…SLPH, and PVNA…LISH. The DWD box signature appears at 256-274; it reads WLLATASIDQTVKIWDLRQ. The tract at residues 334–336 is photolesion recognition; the sequence is FQH. WD repeat units lie at residues 343 to 386 and 396 to 420; these read TWHS…MCQL and SLNE…IWSQ.

The protein belongs to the WD repeat DDB2/WDR76 family. In terms of assembly, component of the UV-DDB complex which includes DDB1 and DDB2. The UV-DDB complex interacts with monoubiquitinated histone H2A and binds to XPC via the DDB2 subunit. Component of the DCX (DDB1-CUL4-X-box) E3 ubiquitin-protein ligase complex DDB1-CUL4-ROC1 (also known as CUL4-DDB-ROC1 and CUL4-DDB-RBX1), which includes CUL4A or CUL4B, DDB1, DDB2 and RBX1. DDB2 may function as the substrate recognition module within this complex. The DDB1-CUL4-ROC1 complex may associate with the COP9 signalosome, and this inhibits the E3 ubiquitin-protein ligase activity of the complex. A large number of other DCX complexes may also exist in which an alternate substrate targeting subunit replaces DDB2. These targeting subunits are generally known as DCAF (DDB1- and CUL4-associated factor) or CDW (CUL4-DDB1-associated WD40-repeat) proteins. In terms of processing, phosphorylation by ABL1 negatively regulate UV-DDB activity. Ubiquitinated by CUL4A in response to UV irradiation. Ubiquitination appears to both impair DNA-binding and promotes ubiquitin-dependent proteolysis. Degradation of DDB2 at sites of DNA damage may be a prerequisite for their recognition by XPC and subsequent repair. CUL4A-mediated degradation appears to be promoted by ABL1. Post-translationally, ubiquitinated, leading to proteasomal degradation, and deubiquitinated by USP24. Deubiquitinated by USP44; leading to its stabilization on DNA lesions. In terms of processing, acetylated. Deacetylation by SIRT6 in response to UV stress facilitates nucleotide excision repair pathway (the NER pathway) transduction. In terms of tissue distribution, expressed in bone marrow, liver, lung, muscle, pancreas and spleen.

The protein resides in the nucleus. The protein localises to the chromosome. Its pathway is protein modification; protein ubiquitination. Functionally, protein, which is both involved in DNA repair and protein ubiquitination, as part of the UV-DDB complex and DCX (DDB1-CUL4-X-box) complexes, respectively. Core component of the UV-DDB complex (UV-damaged DNA-binding protein complex), a complex that recognizes UV-induced DNA damage and recruit proteins of the nucleotide excision repair pathway (the NER pathway) to initiate DNA repair. The UV-DDB complex preferentially binds to cyclobutane pyrimidine dimers (CPD), 6-4 photoproducts (6-4 PP), apurinic sites and short mismatches. Also functions as the substrate recognition module for the DCX (DDB2-CUL4-X-box) E3 ubiquitin-protein ligase complex DDB2-CUL4-ROC1 (also known as CUL4-DDB-ROC1 and CUL4-DDB-RBX1). The DDB2-CUL4-ROC1 complex may ubiquitinate histone H2A, histone H3 and histone H4 at sites of UV-induced DNA damage. The ubiquitination of histones may facilitate their removal from the nucleosome and promote subsequent DNA repair. The DDB2-CUL4-ROC1 complex also ubiquitinates XPC, which may enhance DNA-binding by XPC and promote NER. The DDB2-CUL4-ROC1 complex also ubiquitinates KAT7/HBO1 in response to DNA damage, leading to its degradation: recognizes KAT7/HBO1 following phosphorylation by ATR. The polypeptide is DNA damage-binding protein 2 (Ddb2) (Mus musculus (Mouse)).